Here is a 930-residue protein sequence, read N- to C-terminus: Translation initiation factor IF-2 (930 aa).

The segment at 31–317 (FVKSASSTVE…RKSKRAKRAE (287 aa)) is disordered. The segment covering 61 to 78 (PAAGASNGAPAKPSAPGA) has biased composition (low complexity). Composition is skewed to pro residues over residues 79-99 (RPGP…PAPA) and 108-120 (PAAP…PPAP). Low complexity predominate over residues 121-135 (AASAAPPSAPEAPSA). Pro residues-rich tracts occupy residues 136–158 (RPTP…PAPR) and 178–192 (PRPQ…PRPG). Gly residues predominate over residues 193 to 205 (PGAGGPRPGGGPR). The segment covering 212-242 (NMPPRPVGGPRPGGGPRPGGGPRPGAGPRPT) has biased composition (pro residues). Positions 244-301 (GGAGRPGGGGGGNYRGGGAGGGGGAGGAAAGGFRGRPGGGGGRPGQRGGAAGAFGRPG) are enriched in gly residues. The span at 305 to 314 (KRGRKSKRAK) shows a compositional bias: basic residues. The tr-type G domain occupies 426-598 (FRPPVVTVMG…VVLTADASLD (173 aa)). A G1 region spans residues 435–442 (GHVDHGKT). 435-442 (GHVDHGKT) contributes to the GTP binding site. The tract at residues 460 to 464 (GITQH) is G2. The interval 485-488 (DTPG) is G3. Residues 485–489 (DTPGH) and 539–542 (NKID) contribute to the GTP site. Residues 539–542 (NKID) are G4. Residues 575-577 (SAK) are G5.

This sequence belongs to the TRAFAC class translation factor GTPase superfamily. Classic translation factor GTPase family. IF-2 subfamily.

The protein resides in the cytoplasm. Its function is as follows. One of the essential components for the initiation of protein synthesis. Protects formylmethionyl-tRNA from spontaneous hydrolysis and promotes its binding to the 30S ribosomal subunits. Also involved in the hydrolysis of GTP during the formation of the 70S ribosomal complex. This is Translation initiation factor IF-2 from Mycolicibacterium gilvum (strain PYR-GCK) (Mycobacterium gilvum (strain PYR-GCK)).